The following is a 333-amino-acid chain: MSATIRIAVDAMSGDLGPRVAIDAAQNFLQCHSDLEITLVGDESQLQQAHSLTGKNSRLHYLHAPDVVTMADDPLSALRHKKNSSMWKSLELLCLDRADACVSAGNTGALLAMARHQIKTLPGIERPAICKSMPVRSGVTYLLDLGANIDVGPELLHQFALMGAALARAAGVANPRVSLLNIGTEEYKGTQVLQQAQVLLQSDNSFTYSGFVEANRIFNGDVDVIVCDGFHGNVALKASEGVAQFIADKIAVEFKRHVFSRVMAFLAWPTLRRLKLQLNPARYNGASFLGLQKPVIKSHGNANEQAFIHALEVALQQVQERVPQRILEQISLH.

The protein belongs to the PlsX family. In terms of assembly, homodimer. Probably interacts with PlsY.

The protein resides in the cytoplasm. It catalyses the reaction a fatty acyl-[ACP] + phosphate = an acyl phosphate + holo-[ACP]. Its pathway is lipid metabolism; phospholipid metabolism. Functionally, catalyzes the reversible formation of acyl-phosphate (acyl-PO(4)) from acyl-[acyl-carrier-protein] (acyl-ACP). This enzyme utilizes acyl-ACP as fatty acyl donor, but not acyl-CoA. The protein is Phosphate acyltransferase of Cellvibrio japonicus (strain Ueda107) (Pseudomonas fluorescens subsp. cellulosa).